We begin with the raw amino-acid sequence, 192 residues long: Transmembrane protein 276 (192 aa).

Positions 1–32 (MVSKPRNEWSTALSHLVLAGVSLHAAVSSVQS) are cleaved as a signal peptide. The next 4 membrane-spanning stretches (helical) occupy residues 35–55 (GAAA…APEL), 63–83 (AGAW…FHWV), 92–112 (LLLG…PEGC), and 114–134 (VAGQ…AVFT).

The protein resides in the membrane. The protein is Transmembrane protein 276 of Rattus norvegicus (Rat).